A 293-amino-acid polypeptide reads, in one-letter code: Phosphatidylserine decarboxylase proenzyme (293 aa).

Active-site charge relay system; for autoendoproteolytic cleavage activity residues include Asp88, His144, and Ser247. Residue Ser247 is the Schiff-base intermediate with substrate; via pyruvic acid; for decarboxylase activity of the active site. A Pyruvic acid (Ser); by autocatalysis modification is found at Ser247.

It belongs to the phosphatidylserine decarboxylase family. PSD-B subfamily. Prokaryotic type I sub-subfamily. In terms of assembly, heterodimer of a large membrane-associated beta subunit and a small pyruvoyl-containing alpha subunit. Pyruvate is required as a cofactor. Is synthesized initially as an inactive proenzyme. Formation of the active enzyme involves a self-maturation process in which the active site pyruvoyl group is generated from an internal serine residue via an autocatalytic post-translational modification. Two non-identical subunits are generated from the proenzyme in this reaction, and the pyruvate is formed at the N-terminus of the alpha chain, which is derived from the carboxyl end of the proenzyme. The autoendoproteolytic cleavage occurs by a canonical serine protease mechanism, in which the side chain hydroxyl group of the serine supplies its oxygen atom to form the C-terminus of the beta chain, while the remainder of the serine residue undergoes an oxidative deamination to produce ammonia and the pyruvoyl prosthetic group on the alpha chain. During this reaction, the Ser that is part of the protease active site of the proenzyme becomes the pyruvoyl prosthetic group, which constitutes an essential element of the active site of the mature decarboxylase.

It localises to the cell membrane. The catalysed reaction is a 1,2-diacyl-sn-glycero-3-phospho-L-serine + H(+) = a 1,2-diacyl-sn-glycero-3-phosphoethanolamine + CO2. It participates in phospholipid metabolism; phosphatidylethanolamine biosynthesis; phosphatidylethanolamine from CDP-diacylglycerol: step 2/2. Its function is as follows. Catalyzes the formation of phosphatidylethanolamine (PtdEtn) from phosphatidylserine (PtdSer). The chain is Phosphatidylserine decarboxylase proenzyme from Xylella fastidiosa (strain M23).